We begin with the raw amino-acid sequence, 206 residues long: Holliday junction branch migration complex subunit RuvA (206 aa).

Residues 1-64 are domain I; the sequence is MIGRLSGTIL…EDAQLLYGFN (64 aa). A domain II region spans residues 65–143; sequence KKSERELFRE…GWGEGDLFTP (79 aa). Positions 144–157 are flexible linker; sequence ASDAAASNAEIQKY. The interval 158–206 is domain III; it reads SSARAEDEAVSALIALGYKALQAAKVVSQVVKPEMSSENIIREALRSMV.

Belongs to the RuvA family. As to quaternary structure, homotetramer. Forms an RuvA(8)-RuvB(12)-Holliday junction (HJ) complex. HJ DNA is sandwiched between 2 RuvA tetramers; dsDNA enters through RuvA and exits via RuvB. An RuvB hexamer assembles on each DNA strand where it exits the tetramer. Each RuvB hexamer is contacted by two RuvA subunits (via domain III) on 2 adjacent RuvB subunits; this complex drives branch migration. In the full resolvosome a probable DNA-RuvA(4)-RuvB(12)-RuvC(2) complex forms which resolves the HJ.

It localises to the cytoplasm. In terms of biological role, the RuvA-RuvB-RuvC complex processes Holliday junction (HJ) DNA during genetic recombination and DNA repair, while the RuvA-RuvB complex plays an important role in the rescue of blocked DNA replication forks via replication fork reversal (RFR). RuvA specifically binds to HJ cruciform DNA, conferring on it an open structure. The RuvB hexamer acts as an ATP-dependent pump, pulling dsDNA into and through the RuvAB complex. HJ branch migration allows RuvC to scan DNA until it finds its consensus sequence, where it cleaves and resolves the cruciform DNA. This Photobacterium profundum (strain SS9) protein is Holliday junction branch migration complex subunit RuvA.